We begin with the raw amino-acid sequence, 357 residues long: Phospho-N-acetylmuramoyl-pentapeptide-transferase (357 aa).

The next 10 helical transmembrane spans lie at 23–43 (AIFS…YFIY), 70–90 (TMGG…YCNL), 91–111 (SNIY…IGFI), 127–147 (LKWK…MIKI), 171–191 (YLYI…VNLT), 196–216 (GLAI…SLFS), 236–256 (LAIL…FNSY), 260–280 (VFMG…IAIL), 286–306 (LLII…LQII), and 334–354 (LIIV…LISL).

The protein belongs to the glycosyltransferase 4 family. MraY subfamily. It depends on Mg(2+) as a cofactor.

Its subcellular location is the cell inner membrane. The enzyme catalyses UDP-N-acetyl-alpha-D-muramoyl-L-alanyl-gamma-D-glutamyl-meso-2,6-diaminopimeloyl-D-alanyl-D-alanine + di-trans,octa-cis-undecaprenyl phosphate = di-trans,octa-cis-undecaprenyl diphospho-N-acetyl-alpha-D-muramoyl-L-alanyl-D-glutamyl-meso-2,6-diaminopimeloyl-D-alanyl-D-alanine + UMP. The protein operates within cell wall biogenesis; peptidoglycan biosynthesis. Functionally, catalyzes the initial step of the lipid cycle reactions in the biosynthesis of the cell wall peptidoglycan: transfers peptidoglycan precursor phospho-MurNAc-pentapeptide from UDP-MurNAc-pentapeptide onto the lipid carrier undecaprenyl phosphate, yielding undecaprenyl-pyrophosphoryl-MurNAc-pentapeptide, known as lipid I. This is Phospho-N-acetylmuramoyl-pentapeptide-transferase from Buchnera aphidicola subsp. Acyrthosiphon pisum (strain 5A).